Consider the following 196-residue polypeptide: Ribose 1,5-bisphosphate phosphokinase PhnN (196 aa).

This sequence belongs to the ribose 1,5-bisphosphokinase family.

The enzyme catalyses alpha-D-ribose 1,5-bisphosphate + ATP = 5-phospho-alpha-D-ribose 1-diphosphate + ADP. The protein operates within metabolic intermediate biosynthesis; 5-phospho-alpha-D-ribose 1-diphosphate biosynthesis; 5-phospho-alpha-D-ribose 1-diphosphate from D-ribose 5-phosphate (route II): step 3/3. Functionally, catalyzes the phosphorylation of ribose 1,5-bisphosphate to 5-phospho-D-ribosyl alpha-1-diphosphate (PRPP). In Psychromonas ingrahamii (strain DSM 17664 / CCUG 51855 / 37), this protein is Ribose 1,5-bisphosphate phosphokinase PhnN.